Here is a 313-residue protein sequence, read N- to C-terminus: tRNA dimethylallyltransferase (313 aa).

10 to 17 serves as a coordination point for ATP; the sequence is GPTASGKT. A substrate-binding site is contributed by 12-17; sequence TASGKT. 3 interaction with substrate tRNA regions span residues 35 to 38, 159 to 163, and 240 to 245; these read DSAM, QRIQR, and RCVGYR.

The protein belongs to the IPP transferase family. Monomer. Mg(2+) serves as cofactor.

It catalyses the reaction adenosine(37) in tRNA + dimethylallyl diphosphate = N(6)-dimethylallyladenosine(37) in tRNA + diphosphate. Its function is as follows. Catalyzes the transfer of a dimethylallyl group onto the adenine at position 37 in tRNAs that read codons beginning with uridine, leading to the formation of N6-(dimethylallyl)adenosine (i(6)A). The protein is tRNA dimethylallyltransferase of Legionella pneumophila (strain Lens).